The sequence spans 721 residues: Fatty acid oxidation complex subunit alpha (721 aa).

An enoyl-CoA hydratase/isomerase region spans residues 1 to 190 (MIYEGKAITV…KVGAVDAVVA (190 aa)). A substrate-binding site is contributed by Asp297. A 3-hydroxyacyl-CoA dehydrogenase region spans residues 312–721 (KDVKQAAVLG…SFFGQASSEE (410 aa)). Residues Met325, Asp344, 401–403 (VVE), Lys408, and Ser430 contribute to the NAD(+) site. Residue His451 is the For 3-hydroxyacyl-CoA dehydrogenase activity of the active site. Position 454 (Asn454) interacts with NAD(+). Substrate contacts are provided by Asn501 and Tyr660.

In the N-terminal section; belongs to the enoyl-CoA hydratase/isomerase family. It in the C-terminal section; belongs to the 3-hydroxyacyl-CoA dehydrogenase family. In terms of assembly, heterotetramer of two alpha chains (FadB) and two beta chains (FadA).

The enzyme catalyses a (3S)-3-hydroxyacyl-CoA + NAD(+) = a 3-oxoacyl-CoA + NADH + H(+). It carries out the reaction a (3S)-3-hydroxyacyl-CoA = a (2E)-enoyl-CoA + H2O. The catalysed reaction is a 4-saturated-(3S)-3-hydroxyacyl-CoA = a (3E)-enoyl-CoA + H2O. It catalyses the reaction (3S)-3-hydroxybutanoyl-CoA = (3R)-3-hydroxybutanoyl-CoA. The enzyme catalyses a (3Z)-enoyl-CoA = a 4-saturated (2E)-enoyl-CoA. It carries out the reaction a (3E)-enoyl-CoA = a 4-saturated (2E)-enoyl-CoA. It participates in lipid metabolism; fatty acid beta-oxidation. Functionally, involved in the aerobic and anaerobic degradation of long-chain fatty acids via beta-oxidation cycle. Catalyzes the formation of 3-oxoacyl-CoA from enoyl-CoA via L-3-hydroxyacyl-CoA. It can also use D-3-hydroxyacyl-CoA and cis-3-enoyl-CoA as substrate. This chain is Fatty acid oxidation complex subunit alpha, found in Pseudomonas savastanoi pv. phaseolicola (strain 1448A / Race 6) (Pseudomonas syringae pv. phaseolicola (strain 1448A / Race 6)).